A 352-amino-acid polypeptide reads, in one-letter code: S-adenosylmethionine:tRNA ribosyltransferase-isomerase (352 aa).

It belongs to the QueA family. In terms of assembly, monomer.

It localises to the cytoplasm. The catalysed reaction is 7-aminomethyl-7-carbaguanosine(34) in tRNA + S-adenosyl-L-methionine = epoxyqueuosine(34) in tRNA + adenine + L-methionine + 2 H(+). It functions in the pathway tRNA modification; tRNA-queuosine biosynthesis. In terms of biological role, transfers and isomerizes the ribose moiety from AdoMet to the 7-aminomethyl group of 7-deazaguanine (preQ1-tRNA) to give epoxyqueuosine (oQ-tRNA). In Vibrio cholerae serotype O1 (strain ATCC 39315 / El Tor Inaba N16961), this protein is S-adenosylmethionine:tRNA ribosyltransferase-isomerase.